Here is a 212-residue protein sequence, read N- to C-terminus: Methylthioribulose-1-phosphate dehydratase (212 aa).

Zn(2+) is bound by residues His-97 and His-99.

It belongs to the aldolase class II family. MtnB subfamily. As to quaternary structure, homotetramer. The cofactor is Zn(2+).

It catalyses the reaction 5-(methylsulfanyl)-D-ribulose 1-phosphate = 5-methylsulfanyl-2,3-dioxopentyl phosphate + H2O. Its pathway is amino-acid biosynthesis; L-methionine biosynthesis via salvage pathway; L-methionine from S-methyl-5-thio-alpha-D-ribose 1-phosphate: step 2/6. Catalyzes the dehydration of methylthioribulose-1-phosphate (MTRu-1-P) into 2,3-diketo-5-methylthiopentyl-1-phosphate (DK-MTP-1-P). The chain is Methylthioribulose-1-phosphate dehydratase from Bacillus cereus (strain ZK / E33L).